The primary structure comprises 991 residues: Adhesion G-protein coupled receptor F3 (991 aa).

The first 20 residues, 1 to 20 (MSSLALSQLLLAVTLPLLEL), serve as a signal peptide directing secretion. At 21–694 (EPTFVPTAQS…ENPTLDLLSQ (674 aa)) the chain is on the extracellular side. N-linked (GlcNAc...) asparagine glycans are attached at residues Asn-75, Asn-102, Asn-118, Asn-321, Asn-362, Asn-484, Asn-571, Asn-589, Asn-630, and Asn-660. Residues 519–684 (HPFSFSSANV…SILMSQHTVP (166 aa)) enclose the GAIN-B domain. 2 disulfide bridges follow: Cys-635–Cys-666 and Cys-654–Cys-668. Positions 635 to 684 (CVFWDHRVFQGQGGWSDEGCEVHAANASITQCICQHLTAFSILMSQHTVP) are GPS. Residues 695–715 (VGTGASVLALLVCLAIYGLVW) form a helical membrane-spanning segment. At 716–730 (RVVVRNKVAFFRHTT) the chain is on the cytoplasmic side. The chain crosses the membrane as a helical span at residues 731-751 (LFNMVICLLVADTCFLGSPFL). The Extracellular segment spans residues 752–757 (PSGYHS). A helical transmembrane segment spans residues 758–778 (LICLVTAFLCHFFYLATFFWM). Topologically, residues 779–799 (LAQALVLAHQLLFVFHQLSKH) are cytoplasmic. A helical membrane pass occupies residues 800-820 (VVLSLMVMLGYLCPLGFAGVT). Residues 821–850 (LGLYLPQRKYLWEGKCFLNGGGVMLYSFSE) are Extracellular-facing. Residues 851–871 (PVLAIVGVNGLVLVIAVLKLL) form a helical membrane-spanning segment. Topologically, residues 872–892 (RPSLSEGPTVEKRQALVGVLK) are cytoplasmic. A helical transmembrane segment spans residues 893–913 (ALLILTPIFGLTWGLGVATLF). At 914–916 (DGS) the chain is on the extracellular side. The helical transmembrane segment at 917-937 (IVSHYAFSILNSLQGVFILVF) threads the bilayer. At 938-991 (GCLTDKKVLEALRKRLRGSRSSNSAISMVTNETYTSEHSKERSEPASYEERMTD) the chain is on the cytoplasmic side. The disordered stretch occupies residues 964-991 (SMVTNETYTSEHSKERSEPASYEERMTD). The span at 972–991 (TSEHSKERSEPASYEERMTD) shows a compositional bias: basic and acidic residues.

It belongs to the G-protein coupled receptor 2 family. Adhesion G-protein coupled receptor (ADGR) subfamily. As to quaternary structure, heterodimer of 2 chains generated by proteolytic processing; the large extracellular N-terminal fragment and the membrane-bound C-terminal fragment predominantly remain associated and non-covalently linked. Autoproteolytically processed at the GPS region of the GAIN-B domain; this cleavage modulates receptor activity. Expression is restricted to testis and circumvallate papillae.

It localises to the membrane. Functionally, orphan receptor. This Mus musculus (Mouse) protein is Adhesion G-protein coupled receptor F3 (ADGRF3).